The chain runs to 102 residues: Large ribosomal subunit protein bL21 (102 aa).

It belongs to the bacterial ribosomal protein bL21 family. In terms of assembly, part of the 50S ribosomal subunit. Contacts protein L20.

Its function is as follows. This protein binds to 23S rRNA in the presence of protein L20. The sequence is that of Large ribosomal subunit protein bL21 from Geotalea daltonii (strain DSM 22248 / JCM 15807 / FRC-32) (Geobacter daltonii).